A 642-amino-acid chain; its full sequence is MPVITLPDGSKREFATPVSTLDVAADIGPGLAKACIAGRVNGELKDACDIIDTDSELSIITAKDEEGVEILRHSCAHLLGHAFKQLWPEAKMAIGPVIDNGFYYDIDLDHKLTQEDIDALEKRMVQLAKTNYIVEKRVGSWQVARDTFEARGETYKMEILDENISKDDQPALYHHEEYVDMCRGPHVPNMKFCQHFKLMSVAGAYWRGNSDNKMLQRVYGTAWADKKALKVHLNRLEEAAKRDHRKIGKQLDLYHMQEEAPGMVFWHNDGWSLFLELEKFIRQKLGQYTYQEVKGPLMMDRVLWERSGHWDKYSEAMFTTNSENREYAIKPMNCPGHVQIFNQGLKSYRDLPLRMAEFGCCHRNEPSGSLHGLMRVRGFTQDDAHVFCTEDQVQQEVSACIKMVYDTYETFGFKDIVVKLSTRPEKRIGDDDMWDRAEEALKQALTANDIAYEILPGEGAFYGPKIEFTLHDCLDRAWQCGTVQLDYALPGRLGATYVAEDNSRQTPVMIHRAILGSLERFLGILIEEYAGKFPTWLAPMQAVVMNITDKQSDYVDEVVNILKENGIRASKDLRNEKIGFKIREHTLRRVPYLLVVGDQEMENKEVAVRTRDGVDLGKIQISEFASKIKEQISLRSLNLLEE.

The region spanning 1 to 61 (MPVITLPDGS…DTDSELSIIT (61 aa)) is the TGS domain. The interval 243–534 (DHRKIGKQLD…LIEEYAGKFP (292 aa)) is catalytic. Zn(2+) contacts are provided by cysteine 334, histidine 385, and histidine 511.

The protein belongs to the class-II aminoacyl-tRNA synthetase family. Homodimer. Zn(2+) is required as a cofactor.

It localises to the cytoplasm. The catalysed reaction is tRNA(Thr) + L-threonine + ATP = L-threonyl-tRNA(Thr) + AMP + diphosphate + H(+). Functionally, catalyzes the attachment of threonine to tRNA(Thr) in a two-step reaction: L-threonine is first activated by ATP to form Thr-AMP and then transferred to the acceptor end of tRNA(Thr). Also edits incorrectly charged L-seryl-tRNA(Thr). The protein is Threonine--tRNA ligase of Shewanella woodyi (strain ATCC 51908 / MS32).